Consider the following 431-residue polypeptide: 5-methylthioadenosine/S-adenosylhomocysteine deaminase (431 aa).

Residues H66 and H68 each contribute to the Zn(2+) site. Residues E95, R147, and H185 each coordinate substrate. H212 provides a ligand contact to Zn(2+). Residues E215 and D300 each contribute to the substrate site. Residue D300 coordinates Zn(2+).

The protein belongs to the metallo-dependent hydrolases superfamily. MTA/SAH deaminase family. Zn(2+) is required as a cofactor.

The catalysed reaction is S-adenosyl-L-homocysteine + H2O + H(+) = S-inosyl-L-homocysteine + NH4(+). It catalyses the reaction S-methyl-5'-thioadenosine + H2O + H(+) = S-methyl-5'-thioinosine + NH4(+). Catalyzes the deamination of 5-methylthioadenosine and S-adenosyl-L-homocysteine into 5-methylthioinosine and S-inosyl-L-homocysteine, respectively. Is also able to deaminate adenosine. The sequence is that of 5-methylthioadenosine/S-adenosylhomocysteine deaminase from Desulfitobacterium hafniense (strain Y51).